A 227-amino-acid polypeptide reads, in one-letter code: Ubiquitin-conjugating enzyme E2 6 (227 aa).

Topologically, residues 1–206 are cytoplasmic; it reads MASKGAYKRL…NSKQSWVKSR (206 aa). The region spanning 5-163 is the UBC core domain; sequence GAYKRLMKEY…FPELIDKNRE (159 aa). Cys87 (glycyl thioester intermediate) is an active-site residue. A helical membrane pass occupies residues 207–225; sequence WSIAVLVFFALALARFFGA.

The protein belongs to the ubiquitin-conjugating enzyme family.

The protein resides in the endoplasmic reticulum membrane. It carries out the reaction S-ubiquitinyl-[E1 ubiquitin-activating enzyme]-L-cysteine + [E2 ubiquitin-conjugating enzyme]-L-cysteine = [E1 ubiquitin-activating enzyme]-L-cysteine + S-ubiquitinyl-[E2 ubiquitin-conjugating enzyme]-L-cysteine.. The protein operates within protein modification; protein ubiquitination. Catalyzes the covalent attachment of ubiquitin to other proteins. Functions in degradation of misfolded or regulated proteins localized in the endoplasmic reticulum (ER) lumen or membrane via the ubiquitin-proteasome system. Cognate E2 conjugating enzyme for the doa10 ubiquitin ligase complex, which is part of the ERAD-C pathway responsible for the rapid degradation of membrane proteins with misfolded cytoplasmic domains. The polypeptide is Ubiquitin-conjugating enzyme E2 6 (ubc6) (Schizosaccharomyces pombe (strain 972 / ATCC 24843) (Fission yeast)).